The sequence spans 364 residues: MTATSPHGARLTINLRALAANWRRLAEEAAGAECAAVIKADAYGTGIDRAGPALWRAGCRTFFVAHLSEAERARAALPEAVIYVLNGLPPGSAPAYRDRALRPVLGSREEIEEWAAFCRARGERLPAALHVDTGMNRLGLSPDEALALAGGAALEDVAASLLVSHLVSAEVPGDAVTARQVADFARVAAAFPGLTASLGNSAGTFLGARARHEMVRPGYALYGGNPRPGGPNPMRPVVRLDATILQVRDVPPGATAGYNARWTAPGPRRLATLSLGYADGYPRAGSGRAEAVVAGRRCPVVGTISMDLVILDVTDAPPEAARRGARATLIGEGLDIDEVGQRAGTIGYEILTNLGRRSERAYID.

Residue K39 is the Proton acceptor; specific for D-alanine of the active site. N6-(pyridoxal phosphate)lysine is present on K39. Substrate is bound at residue R137. Y258 serves as the catalytic Proton acceptor; specific for L-alanine. Substrate is bound at residue M306.

It belongs to the alanine racemase family. The cofactor is pyridoxal 5'-phosphate.

It carries out the reaction L-alanine = D-alanine. Its pathway is amino-acid biosynthesis; D-alanine biosynthesis; D-alanine from L-alanine: step 1/1. Catalyzes the interconversion of L-alanine and D-alanine. May also act on other amino acids. This is Alanine racemase (alr) from Methylobacterium sp. (strain 4-46).